Consider the following 558-residue polypeptide: Ribonuclease J (558 aa).

Residues histidine 81, histidine 83, aspartate 85, histidine 86, histidine 148, and aspartate 170 each contribute to the Zn(2+) site. 371 to 375 (HVSGH) serves as a coordination point for substrate. Zn(2+) is bound at residue histidine 397.

Belongs to the metallo-beta-lactamase superfamily. RNA-metabolizing metallo-beta-lactamase-like family. Bacterial RNase J subfamily. As to quaternary structure, homodimer, may be a subunit of the RNA degradosome. The cofactor is Zn(2+).

The protein resides in the cytoplasm. In terms of biological role, an RNase that has 5'-3' exonuclease and possibly endoonuclease activity. Involved in maturation of rRNA and in some organisms also mRNA maturation and/or decay. This is Ribonuclease J from Mycobacterium tuberculosis (strain CDC 1551 / Oshkosh).